The chain runs to 151 residues: Small ribosomal subunit protein uS15 (151 aa).

It belongs to the universal ribosomal protein uS15 family.

The sequence is that of Small ribosomal subunit protein uS15 (RpS13) from Anopheles gambiae (African malaria mosquito).